The primary structure comprises 145 residues: Ribonuclease H (145 aa).

The RNase H type-1 domain maps to 1–141 (MQEVELFTDG…VDELANQAMD (141 aa)). 4 residues coordinate Mg(2+): aspartate 9, glutamate 47, aspartate 69, and aspartate 133.

It belongs to the RNase H family. In terms of assembly, monomer. It depends on Mg(2+) as a cofactor.

The protein resides in the cytoplasm. The enzyme catalyses Endonucleolytic cleavage to 5'-phosphomonoester.. Functionally, endonuclease that specifically degrades the RNA of RNA-DNA hybrids. This is Ribonuclease H from Hydrogenovibrio crunogenus (strain DSM 25203 / XCL-2) (Thiomicrospira crunogena).